We begin with the raw amino-acid sequence, 509 residues long: MDIRAAEISAILKDQIKNFGQEAEVSEVGQVLSVGDGIARVYGLDNVQAGEMVEFPGGIRGMALNLEADNVGVVIFGSDRDIKEGDTVKRTGAIVDVPVGPELLGRVVDALGNPIDGKGPINAKQRARVDVKAPGIIPRKSVHEPMSTGLKAIDALIPVGRGQRELVIGDRQTGKTAIILDTILNQKAIHDNGPEGDKLYCVYVAIGQKRSTVAQFVKVLEERGALQYSIIVAATASDAAPMQYLAPFAGCTMGEYFRDSGKHALIGYDDLSKQAVAYRQMSLLLRRPPGREAYPGDVFYLHSRLLERAAKLNDDNGAGSLTALPVIETQGNDVSAFIPTNVISITDGQIFLETDLFYQGIRPAVNVGLSVSRVGSSAQIKAMKQVAGSIKGELAQYREMAAFAQFGSDLDAATQRLLNRGARLTELLKQPQFSPLKTEEQVAVIFAGVNGFLDKLPVADVGKFEQGLLSYMRSEGKAVLDTIRTEKAISDDTKAKLKAAIDSFAKSFA.

169-176 (GDRQTGKT) serves as a coordination point for ATP.

This sequence belongs to the ATPase alpha/beta chains family. In terms of assembly, F-type ATPases have 2 components, CF(1) - the catalytic core - and CF(0) - the membrane proton channel. CF(1) has five subunits: alpha(3), beta(3), gamma(1), delta(1), epsilon(1). CF(0) has three main subunits: a(1), b(2) and c(9-12). The alpha and beta chains form an alternating ring which encloses part of the gamma chain. CF(1) is attached to CF(0) by a central stalk formed by the gamma and epsilon chains, while a peripheral stalk is formed by the delta and b chains.

Its subcellular location is the cell inner membrane. The catalysed reaction is ATP + H2O + 4 H(+)(in) = ADP + phosphate + 5 H(+)(out). In terms of biological role, produces ATP from ADP in the presence of a proton gradient across the membrane. The alpha chain is a regulatory subunit. This is ATP synthase subunit alpha from Sinorhizobium medicae (strain WSM419) (Ensifer medicae).